The primary structure comprises 330 residues: Aspartate--ammonia ligase (330 aa).

Belongs to the class-II aminoacyl-tRNA synthetase family. AsnA subfamily.

Its subcellular location is the cytoplasm. It catalyses the reaction L-aspartate + NH4(+) + ATP = L-asparagine + AMP + diphosphate + H(+). It functions in the pathway amino-acid biosynthesis; L-asparagine biosynthesis; L-asparagine from L-aspartate (ammonia route): step 1/1. The protein is Aspartate--ammonia ligase of Shigella dysenteriae serotype 1 (strain Sd197).